We begin with the raw amino-acid sequence, 1049 residues long: Probable disease resistance protein RF9 (1049 aa).

Residues 25–41 (QGVEDQVTELKRDLNLL) are a coiled coil. The segment at 139–158 (GYKQPQGDKQREMRPRFSKD) is disordered. Residues 144–158 (QGDKQREMRPRFSKD) show a composition bias toward basic and acidic residues. One can recognise an NB-ARC domain in the interval 147-460 (KQREMRPRFS…AEGIFQPRHY (314 aa)). 190-197 (GMGGLGKT) provides a ligand contact to ATP. LRR repeat units follow at residues 584–608 (LELL…SIGQ), 609–634 (LIHL…NLKL), 657–682 (MQQL…NLVK), 683–707 (LETL…RLRT), 776–799 (PSHL…ILEK), 800–827 (LHQL…GFPQ), 849–873 (MPVL…HLPS), 896–923 (LVHL…GFPQ), 945–968 (MPQL…GFPQ), and 990–1015 (MPLL…RFIY).

This sequence belongs to the disease resistance NB-LRR family.

Its function is as follows. Potential disease resistance protein. This is Probable disease resistance protein RF9 (RF9) from Arabidopsis thaliana (Mouse-ear cress).